Reading from the N-terminus, the 160-residue chain is Cytochrome c-type biogenesis protein CcmE (160 aa).

Residues 1–8 (MNPRRKQR) are Cytoplasmic-facing. A helical; Signal-anchor for type II membrane protein membrane pass occupies residues 9-29 (LTWVAILVIGVSVATGLMLYA). Topologically, residues 30–160 (LSQSIDLFYT…PNTVEKGEGQ (131 aa)) are periplasmic. Histidine 130 and tyrosine 134 together coordinate heme.

The protein belongs to the CcmE/CycJ family.

Its subcellular location is the cell inner membrane. Its function is as follows. Heme chaperone required for the biogenesis of c-type cytochromes. Transiently binds heme delivered by CcmC and transfers the heme to apo-cytochromes in a process facilitated by CcmF and CcmH. The chain is Cytochrome c-type biogenesis protein CcmE from Idiomarina loihiensis (strain ATCC BAA-735 / DSM 15497 / L2-TR).